The following is a 121-amino-acid chain: Protein YxiB (121 aa).

The sequence is that of Protein YxiB (yxiB) from Bacillus subtilis (strain 168).